Here is a 67-residue protein sequence, read N- to C-terminus: Large ribosomal subunit protein bL35 (67 aa).

Positions 1 to 16 (MPKMKTKSSAKKRFRV) are enriched in basic residues. The disordered stretch occupies residues 1 to 24 (MPKMKTKSSAKKRFRVRPGGTVKR).

It belongs to the bacterial ribosomal protein bL35 family.

This chain is Large ribosomal subunit protein bL35, found in Paracidovorax citrulli (strain AAC00-1) (Acidovorax citrulli).